Here is a 212-residue protein sequence, read N- to C-terminus: MNQSLLSQFGTSEERVKRAIEAFKRGNGVLVLDDEDRENEGDLIFPAETITVEQMAKLIRYGSGIVCLCITDELCQQLDLSPMVQNNTSINQTAFTVSIEAAQGVSTGVSAQDRVTTIQAAIADNAKPQDLSRPGHVFPLRAKKGGVLARRGHTEAAVDLASWAGHKPAGVICEITNDDGSMARTPEIVEFGKKFNYPVVTIEDLVRYASNK.

D-ribulose 5-phosphate-binding positions include 37–38 (RE), D42, 150–154 (RRGHT), and E174. E38 is a Mg(2+) binding site. Mg(2+) is bound at residue H153.

This sequence belongs to the DHBP synthase family. In terms of assembly, homodimer. Mg(2+) is required as a cofactor. Mn(2+) serves as cofactor.

It carries out the reaction D-ribulose 5-phosphate = (2S)-2-hydroxy-3-oxobutyl phosphate + formate + H(+). Its pathway is cofactor biosynthesis; riboflavin biosynthesis; 2-hydroxy-3-oxobutyl phosphate from D-ribulose 5-phosphate: step 1/1. In terms of biological role, catalyzes the conversion of D-ribulose 5-phosphate to formate and 3,4-dihydroxy-2-butanone 4-phosphate. The polypeptide is 3,4-dihydroxy-2-butanone 4-phosphate synthase (Histophilus somni (strain 129Pt) (Haemophilus somnus)).